The chain runs to 407 residues: RING finger protein 44 (407 aa).

The interval 26–58 is disordered; that stretch reads LSSSPGQLWGRPSNLSVEEHRASAPAGRSPRML. The segment at 355–396 adopts an RING-type; atypical zinc-finger fold; it reads CVVCFSDFEVRQLLRVLPCNHEFHAKCVDKWLKANRTCPICR.

This Mus musculus (Mouse) protein is RING finger protein 44 (Rnf44).